The following is a 340-amino-acid chain: Inactive hyaluronidase B (340 aa).

2 cysteine pairs are disulfide-bonded: cysteine 21–cysteine 310 and cysteine 187–cysteine 199. N-linked (GlcNAc...) asparagine glycans are attached at residues asparagine 66 and asparagine 81.

The protein belongs to the glycosyl hydrolase 56 family. Post-translationally, N-glycosylated on at least two Asn residues by identical heptasaccharide units composed of Man, GlcNAc, and Fuc residues in the molar ration of 3:2:2. Expressed by the venom gland.

Its subcellular location is the secreted. In terms of biological role, has no hyaluronidase activity. In Vespula vulgaris (Yellow jacket), this protein is Inactive hyaluronidase B.